The sequence spans 149 residues: Large ribosomal subunit protein bL9 (149 aa).

This sequence belongs to the bacterial ribosomal protein bL9 family.

Functionally, binds to the 23S rRNA. The sequence is that of Large ribosomal subunit protein bL9 from Mycoplasma pneumoniae (strain ATCC 29342 / M129 / Subtype 1) (Mycoplasmoides pneumoniae).